Consider the following 100-residue polypeptide: Urease subunit gamma 2 (100 aa).

It belongs to the urease gamma subunit family. In terms of assembly, heterotrimer of UreA (gamma), UreB (beta) and UreC (alpha) subunits. Three heterotrimers associate to form the active enzyme.

The protein resides in the cytoplasm. The enzyme catalyses urea + 2 H2O + H(+) = hydrogencarbonate + 2 NH4(+). It functions in the pathway nitrogen metabolism; urea degradation; CO(2) and NH(3) from urea (urease route): step 1/1. In Psychrobacter cryohalolentis (strain ATCC BAA-1226 / DSM 17306 / VKM B-2378 / K5), this protein is Urease subunit gamma 2.